Consider the following 123-residue polypeptide: MSDADLPNDGGIKLVMAIIRPDKLADVKTALAEVGAPSLTVTNVSGRGSQPAKKSQWRGEEYTVDLHQKVKVECVVADTPAEDVADAIADAAHTGEKGDGKIFILPVENAIQVRTGKTGRDAV.

ATP is bound by residues 38-40 (SLT) and Ser-49. Ser-49 contributes to the ADP binding site. At Tyr-62 the chain carries O-UMP-tyrosine. Residues Val-75, 98-101 (GDGK), and Arg-114 contribute to the ATP site. 98 to 101 (GDGK) serves as a coordination point for ADP. Residue 98-101 (GDGK) participates in AMP binding.

This sequence belongs to the P(II) protein family. As to quaternary structure, homotrimer. Interacts with the glutamine synthetase 3 (GS3) in the presence of 2-oxoglutarate. Interacts in vitro with Amt1 after ammonium shock. May also interact with Amt2. Post-translationally, uridylylated on Tyr-62.

The protein resides in the cytoplasm. Binds the effectors ADP and ATP. Also binds AMP with high affinity, raising the possibility that AMP could be an important PII effector, at least in archaea. The change in the ATP/AMP ratio may be more relevant for describing the energy status in the cells than the ATP/ADP ratio alone. Involved in the regulation of nitrogen metabolism. Regulates the activity of its targets by protein-protein interaction in response to the nitrogen status of the cell. Increases the activity of the glutamine synthetase 3 in the presence of 2-oxoglutarate. May regulate the activity of the ammonia channel Amt2 via direct interaction. The protein is Nitrogen regulatory protein GlnK2 of Haloferax mediterranei (strain ATCC 33500 / DSM 1411 / JCM 8866 / NBRC 14739 / NCIMB 2177 / R-4) (Halobacterium mediterranei).